The chain runs to 388 residues: 4-hydroxy-3-methylbut-2-en-1-yl diphosphate synthase (flavodoxin) (388 aa).

[4Fe-4S] cluster contacts are provided by Cys281, Cys284, Cys316, and Glu323.

It belongs to the IspG family. [4Fe-4S] cluster serves as cofactor.

It carries out the reaction (2E)-4-hydroxy-3-methylbut-2-enyl diphosphate + oxidized [flavodoxin] + H2O + 2 H(+) = 2-C-methyl-D-erythritol 2,4-cyclic diphosphate + reduced [flavodoxin]. The protein operates within isoprenoid biosynthesis; isopentenyl diphosphate biosynthesis via DXP pathway; isopentenyl diphosphate from 1-deoxy-D-xylulose 5-phosphate: step 5/6. Its function is as follows. Converts 2C-methyl-D-erythritol 2,4-cyclodiphosphate (ME-2,4cPP) into 1-hydroxy-2-methyl-2-(E)-butenyl 4-diphosphate. The polypeptide is 4-hydroxy-3-methylbut-2-en-1-yl diphosphate synthase (flavodoxin) (Paenarthrobacter aurescens (strain TC1)).